A 186-amino-acid polypeptide reads, in one-letter code: dTTP/UTP pyrophosphatase (186 aa).

Asp70 serves as the catalytic Proton acceptor.

This sequence belongs to the Maf family. YhdE subfamily. Requires a divalent metal cation as cofactor.

The protein resides in the cytoplasm. The catalysed reaction is dTTP + H2O = dTMP + diphosphate + H(+). It catalyses the reaction UTP + H2O = UMP + diphosphate + H(+). Nucleoside triphosphate pyrophosphatase that hydrolyzes dTTP and UTP. May have a dual role in cell division arrest and in preventing the incorporation of modified nucleotides into cellular nucleic acids. The sequence is that of dTTP/UTP pyrophosphatase from Vibrio vulnificus (strain CMCP6).